A 179-amino-acid chain; its full sequence is ATP synthase subunit delta (179 aa).

The protein belongs to the ATPase delta chain family. F-type ATPases have 2 components, F(1) - the catalytic core - and F(0) - the membrane proton channel. F(1) has five subunits: alpha(3), beta(3), gamma(1), delta(1), epsilon(1). F(0) has three main subunits: a(1), b(2) and c(10-14). The alpha and beta chains form an alternating ring which encloses part of the gamma chain. F(1) is attached to F(0) by a central stalk formed by the gamma and epsilon chains, while a peripheral stalk is formed by the delta and b chains.

It localises to the cell inner membrane. Functionally, f(1)F(0) ATP synthase produces ATP from ADP in the presence of a proton or sodium gradient. F-type ATPases consist of two structural domains, F(1) containing the extramembraneous catalytic core and F(0) containing the membrane proton channel, linked together by a central stalk and a peripheral stalk. During catalysis, ATP synthesis in the catalytic domain of F(1) is coupled via a rotary mechanism of the central stalk subunits to proton translocation. Its function is as follows. This protein is part of the stalk that links CF(0) to CF(1). It either transmits conformational changes from CF(0) to CF(1) or is implicated in proton conduction. The protein is ATP synthase subunit delta of Burkholderia multivorans (strain ATCC 17616 / 249).